Reading from the N-terminus, the 887-residue chain is MPGIEQPVSRKNETLVKLSSLADEFVFNDEVQLNLQDVLQECVDTYQNYQDEVKKIKNMDHTESEKVSELCKSAYIYYKIVHNFITKVIPHLPEFEVATGPKASKLQAELIKIYYSLFSRLESDKKISYIKNIIIKHMDTQENNHSVESHEQVKLSNKKLPVNRDAIEIDKDSILQDIRYINGKRSGSGISCSELLSLMKMKEDSLLLIDVRPKLEYDAHHIKTKNIICIEPISFKESYSDQQIEKTSMIPSPKHEIQLFQRRSEFQYIILYTDLEEKSNFYFQQLKSLLEILLQRSFLRPIDDRKTKVLFLSDSLQNWIKNGGEIDKSQEVSKIRNRSISGSGPLLNSLSERKTIGAFPDINRNSTKQMPISPLPSLPGSERTVATPPNGSSTLGRINSPVTHYPKAPLINDSEFHLNINNNHSPPTHLPSKDNNPLASSMPIGSDHKPFMSPQNSLPLAPKPPTLESKNYNFISDRSNIIDQKQNRSRSLEPQLPPIPSTLIRKNSPEKTLSCNQMMDTSFTVGLENMGNSCYINCIIQCIFATTELIKIFLNGTYAKHINKQSKLGSKGVLSHNFAKLLKDMYEENSSKKIGKKHGAVKTLQFKMACASVNSLFKDASQQDCLEFCQFLLDGLHEDLNQCGANPPLKELSPEAEKMRENLSLRVASSIEWERYLTTDFSIIVDLFQGQYASQLRCKVCNRTSTTYQAFSVLSVPVPSGKSCGLLDCFIEFTKTENLEVDEQWFCPSCKKKQPSTKKLTITRLPRNLIIHLKRFDNMMNKNNIFVRYPQILDLTPFWANDSDGKLPPGITDEIPARGQVPPFNYRLYGAACHFGTLYGGHYTSYVDKGPEKGWIYFDDTVYRPVRFQNEFISPSAYVLFYHRITS.

Residues 202 to 328 form the Rhodanese domain; the sequence is KEDSLLLIDV…WIKNGGEIDK (127 aa). Disordered regions lie at residues 358 to 465 and 484 to 505; these read AFPD…PKPP and QKQNRSRSLEPQLPPIPSTLIR. Residues 387-402 are compositionally biased toward polar residues; sequence TPPNGSSTLGRINSPV. The USP domain maps to 525–885; sequence VGLENMGNSC…SAYVLFYHRI (361 aa). Cys-534 serves as the catalytic Nucleophile. His-842 acts as the Proton acceptor in catalysis.

The protein belongs to the peptidase C19 family.

The protein localises to the cytoplasm. The protein resides in the late endosome membrane. The enzyme catalyses Thiol-dependent hydrolysis of ester, thioester, amide, peptide and isopeptide bonds formed by the C-terminal Gly of ubiquitin (a 76-residue protein attached to proteins as an intracellular targeting signal).. With respect to regulation, RFU1 is an inhibitor of deubiquitination activity. Functionally, ubiquitin thioesterase that acts at the late endosome/prevacuolar compartment to recover ubiquitin from ubiquitinated membrane proteins en route to the vacuole. Also removes ubiquitin from soluble proteins targeted to proteasomes. Is essential to maintain a normal level of free ubiquitin. Required for promoting coordination of DNA replication and avoids DNA overreplication. The protein is Ubiquitin carboxyl-terminal hydrolase 4 (DOA4) of Candida glabrata (strain ATCC 2001 / BCRC 20586 / JCM 3761 / NBRC 0622 / NRRL Y-65 / CBS 138) (Yeast).